Reading from the N-terminus, the 425-residue chain is Serine--tRNA ligase (425 aa).

Residue 232-234 coordinates L-serine; the sequence is TSE. ATP is bound by residues 263–265 and V279; that span reads RRE. Residue E286 coordinates L-serine. ATP is bound at residue 350–353; the sequence is EVVS. An L-serine-binding site is contributed by T387.

It belongs to the class-II aminoacyl-tRNA synthetase family. Type-1 seryl-tRNA synthetase subfamily. As to quaternary structure, homodimer. The tRNA molecule binds across the dimer.

The protein localises to the cytoplasm. It carries out the reaction tRNA(Ser) + L-serine + ATP = L-seryl-tRNA(Ser) + AMP + diphosphate + H(+). The enzyme catalyses tRNA(Sec) + L-serine + ATP = L-seryl-tRNA(Sec) + AMP + diphosphate + H(+). It functions in the pathway aminoacyl-tRNA biosynthesis; selenocysteinyl-tRNA(Sec) biosynthesis; L-seryl-tRNA(Sec) from L-serine and tRNA(Sec): step 1/1. In terms of biological role, catalyzes the attachment of serine to tRNA(Ser). Is also able to aminoacylate tRNA(Sec) with serine, to form the misacylated tRNA L-seryl-tRNA(Sec), which will be further converted into selenocysteinyl-tRNA(Sec). The sequence is that of Serine--tRNA ligase from Methanocella arvoryzae (strain DSM 22066 / NBRC 105507 / MRE50).